We begin with the raw amino-acid sequence, 700 residues long: Peroxisomal acyl-coenzyme A oxidase 1 (700 aa).

Residues T147, G186, and 412-417 (CGGHGY) contribute to the FAD site. E437 functions as the Proton acceptor in the catalytic mechanism. Residues 698–700 (SKL) carry the Microbody targeting signal motif.

The protein belongs to the acyl-CoA oxidase family. Requires FAD as cofactor.

It localises to the peroxisome. It catalyses the reaction a 2,3-saturated acyl-CoA + O2 = a (2E)-enoyl-CoA + H2O2. Its function is as follows. Catalyzes the desaturation of acyl-CoAs to 2-trans-enoyl-CoAs. First enzyme of the fatty acid beta-oxidation pathway. This Dictyostelium discoideum (Social amoeba) protein is Peroxisomal acyl-coenzyme A oxidase 1 (acox1).